A 283-amino-acid polypeptide reads, in one-letter code: MCNTPTYCDLGKAAKDVFNKGYGFGMVKIDLRTKSCSGVEFSTSGHAYTDTGKASGNLETKYKICNYGLTFTQKWNTDNTLGTEISWENKLAEGLKLTLDTIFVPNTGKKSGKLKASYKRDCFSLGSNVDIDFSGPTIYGWAVLAFEGWLAGYQMSFDTAKSKLSQNNFALGYKAADFQLHTHVNDGTEFGGSIYQKVNEKIETSINLAWTAGSNNTRFGIAAKYKLDCRTSLSAKVNNASLIGLGYTQTLRPGVKLTLSALIDGKNFNAGGHKVGLGFELEA.

C2 carries the post-translational modification N-acetylcysteine. Position 4 is a phosphothreonine (T4). N6-acetyllysine occurs at positions 12, 15, and 20. A run of 2 beta stranded transmembrane segments spans residues 26-35 (MVKIDLRTKS) and 39-47 (VEFSTSGHA). K53 is covalently cross-linked (Glycyl lysine isopeptide (Lys-Gly) (interchain with G-Cter in ubiquitin)). The next 3 beta stranded transmembrane spans lie at 54-64 (ASGNLETKYKI), 69-76 (LTFTQKWN), and 80-89 (TLGTEISWEN). Residue K90 is modified to N6-acetyllysine. A beta stranded membrane pass occupies residues 95 to 104 (LKLTLDTIFV). Residues K109 and K110 each participate in a glycyl lysine isopeptide (Lys-Gly) (interchain with G-Cter in ubiquitin) cross-link. 10 beta stranded membrane passes run 111–120 (SGKLKASYKR), 123–130 (FSLGSNVD), 137–145 (TIYGWAVLA), 150–158 (LAGYQMSFD), 163–175 (KLSQ…GYKA), 178–185 (FQLHTHVN), 189–198 (EFGGSIYQKV), 202–211 (IETSINLAWT), 218–227 (RFGIAAKYKL), and 231–238 (TSLSAKVN). Position 241 is a phosphoserine (S241). NAD(+)-binding positions include 242-244 (LIG) and 260-264 (SALID). Beta stranded transmembrane passes span 242 to 251 (LIGLGYTQTL) and 254 to 263 (GVKLTLSALI). K266 carries the post-translational modification N6-acetyllysine; alternate. A Glycyl lysine isopeptide (Lys-Gly) (interchain with G-Cter in ubiquitin); alternate cross-link involves residue K266. A beta stranded transmembrane segment spans residues 273-282 (HKVGLGFELE).

Belongs to the eukaryotic mitochondrial porin family. In terms of assembly, interacts with ARMC12 in a TBC1D21-dependent manner. Interacts with MISFA. In terms of processing, ubiquitinated by PRKN during mitophagy, leading to its degradation and enhancement of mitophagy. Deubiquitinated by USP30.

Its subcellular location is the mitochondrion outer membrane. The protein resides in the membrane. It carries out the reaction chloride(in) = chloride(out). The enzyme catalyses K(+)(in) = K(+)(out). Its function is as follows. Non-selective voltage-gated ion channel that mediates the transport of anions and cations through the mitochondrion outer membrane and plasma membrane. Forms a high-conducting channel with a stable open state and a voltage-induced closure with a mild preference for anions over cations. Involved in male fertility and sperm mitochondrial sheath formation. The chain is Non-selective voltage-gated ion channel VDAC3 from Bos taurus (Bovine).